Consider the following 254-residue polypeptide: D-aminoacyl-tRNA deacylase (254 aa).

This sequence belongs to the DtdA deacylase family. In terms of assembly, monomer. Zn(2+) is required as a cofactor.

It catalyses the reaction a D-aminoacyl-tRNA + H2O = a tRNA + a D-alpha-amino acid + H(+). The enzyme catalyses glycyl-tRNA(Ala) + H2O = tRNA(Ala) + glycine + H(+). Functionally, D-aminoacyl-tRNA deacylase with broad substrate specificity. By recycling D-aminoacyl-tRNA to D-amino acids and free tRNA molecules, this enzyme counteracts the toxicity associated with the formation of D-aminoacyl-tRNA entities in vivo. This Methanococcus vannielii (strain ATCC 35089 / DSM 1224 / JCM 13029 / OCM 148 / SB) protein is D-aminoacyl-tRNA deacylase.